Consider the following 322-residue polypeptide: Cytochrome c biogenesis protein CcsA (322 aa).

8 helical membrane passes run 19-39 (NAIF…LIIV), 43-63 (LICN…FFYL), 72-92 (FFPL…LLFI), 104-124 (VIGA…SLSL), 150-170 (MMLS…YLVL), 230-250 (TIGI…VWAN), 264-281 (TWAL…HARL), and 291-311 (AFLG…VNFL).

Belongs to the CcmF/CycK/Ccl1/NrfE/CcsA family. In terms of assembly, may interact with Ccs1.

The protein resides in the plastid. Its subcellular location is the chloroplast thylakoid membrane. In terms of biological role, required during biogenesis of c-type cytochromes (cytochrome c6 and cytochrome f) at the step of heme attachment. The polypeptide is Cytochrome c biogenesis protein CcsA (Heterosigma akashiwo (strain NIES-293 / 8280G21-1)).